The following is a 180-amino-acid chain: Probable cobalt-precorrin-6B C(15)-methyltransferase (decarboxylating) (180 aa).

Residues Thr-16, 40–44 (GCGSG), Asp-61, and Ala-89 each bind S-adenosyl-L-methionine.

Belongs to the methyltransferase superfamily. Archaeal-type CbiT family.

It catalyses the reaction Co-precorrin-6B + S-adenosyl-L-methionine = Co-precorrin-7 + S-adenosyl-L-homocysteine + CO2. The protein operates within cofactor biosynthesis; adenosylcobalamin biosynthesis; cob(II)yrinate a,c-diamide from sirohydrochlorin (anaerobic route): step 8/10. Functionally, catalyzes the methylation of C-15 in cobalt-precorrin-6B followed by the decarboxylation of C-12 to form cobalt-precorrin-7. The chain is Probable cobalt-precorrin-6B C(15)-methyltransferase (decarboxylating) from Methanococcus vannielii (strain ATCC 35089 / DSM 1224 / JCM 13029 / OCM 148 / SB).